A 256-amino-acid polypeptide reads, in one-letter code: Protein RGF1 INDUCIBLE TRANSCRIPTION FACTOR 1 (256 aa).

The B box-type zinc finger occupies 21-59 (CPYHETAKKNERNVCCLDCCTSLCPHCVPSHRFHRLLQV).

In terms of tissue distribution, expressed predominantly in root meristematic zones.

The protein localises to the nucleus. Probable transcription factor that plays a central role in mediating RGF1 hormone peptide signaling leading to the production of reactive oxygen species (ROS) in roots to modulate meristem size and root growth, probably via oxidative post-translational modification of the transcription factor PLETHORA (e.g. PLT1 and PLT2). The chain is Protein RGF1 INDUCIBLE TRANSCRIPTION FACTOR 1 from Arabidopsis thaliana (Mouse-ear cress).